The sequence spans 237 residues: Ribonuclease PH (237 aa).

Phosphate contacts are provided by residues R86 and 124–126; that span reads GTR.

Belongs to the RNase PH family. Homohexameric ring arranged as a trimer of dimers.

The enzyme catalyses tRNA(n+1) + phosphate = tRNA(n) + a ribonucleoside 5'-diphosphate. Its function is as follows. Phosphorolytic 3'-5' exoribonuclease that plays an important role in tRNA 3'-end maturation. Removes nucleotide residues following the 3'-CCA terminus of tRNAs; can also add nucleotides to the ends of RNA molecules by using nucleoside diphosphates as substrates, but this may not be physiologically important. Probably plays a role in initiation of 16S rRNA degradation (leading to ribosome degradation) during starvation. This is Ribonuclease PH from Shewanella woodyi (strain ATCC 51908 / MS32).